A 65-amino-acid polypeptide reads, in one-letter code: Large ribosomal subunit protein bL32 (65 aa).

Belongs to the bacterial ribosomal protein bL32 family.

This is Large ribosomal subunit protein bL32 from Phytoplasma australiense.